Here is a 385-residue protein sequence, read N- to C-terminus: Tumor protein p53-inducible protein 13 (385 aa).

Residues 1–27 (MVHPPPPPPRLLLVALVGLLSLREVVA) form the signal peptide. Residues 28–301 (EPAEEAGTPC…ARGPTPRTEE (274 aa)) lie on the Extracellular side of the membrane. The segment at 242–297 (APVSLTTGGPGGNGRSRTEAQMPSGQGNHGGCACPGQVSPAPRAAGPPRVARGPTP) is disordered. The span at 281–297 (PAPRAAGPPRVARGPTP) shows a compositional bias: low complexity. A helical membrane pass occupies residues 302-322 (AAWAAMALTFLLVLLTLATLC). The Cytoplasmic portion of the chain corresponds to 323 to 385 (TRLHRNFRRS…DSGPDSESSD (63 aa)). Basic residues predominate over residues 359-369 (SRRIKRSRRRP). The segment at 359–385 (SRRIKRSRRRPLLPPTPDSGPDSESSD) is disordered.

It localises to the cell membrane. Its subcellular location is the cytoplasm. In terms of biological role, may act as a tumor suppressor. Inhibits tumor cell growth, when overexpressed. The chain is Tumor protein p53-inducible protein 13 (Tp53i13) from Mus musculus (Mouse).